Reading from the N-terminus, the 785-residue chain is Probable splicing factor 3A subunit 1 (785 aa).

Met1 carries the N-acetylmethionine modification. Positions 1 to 42 (MFSSMQILPLEAPPTDGKLGPLPPSQLTDQEVEERELQAEQN) are disordered. The SURP motif 1 repeat unit spans residues 71 to 113 (IVEKTAQFVSKNGLEFEKRIIVSNEKNAKFNFLKSSDPYHAFY). Positions 124–175 (NKDGAQGTDDSDGTTDPQLDTGAADESEAGDTQPDLQAQFRIPSKPLEAPEP) are disordered. One copy of the SURP motif 2 repeat lies at 193–235 (IIKLTAQFVARNGKSFLTGLSNRENNNPQFHFMKPTHSMFTFF). Disordered regions lie at residues 522–554 (NANGEEQGDGVYGDPNSFPGPAALPPPRPGVPI) and 639–713 (RPYG…PNEN). Composition is skewed to pro residues over residues 543–554 (AALPPPRPGVPI) and 653–674 (QPPPMPGMAPPPPPEEAPPPLP). Residues 677-686 (PEAKRQKFDE) show a composition bias toward basic and acidic residues. Positions 707–782 (VSKPNENDGQ…LTLSLRERGG (76 aa)) constitute a Ubiquitin-like domain.

Component of splicing factor SF3A which is composed of three subunits.

It is found in the nucleus. This is Probable splicing factor 3A subunit 1 from Arabidopsis thaliana (Mouse-ear cress).